The sequence spans 207 residues: MSKGTLYIVSAPSGAGKSSLISALLESNPTYAMKVSVSHTTRGMRPGETDGVHYHFIQKEHFEELIQKGEFLEYAEVFGNYYGTSRVWIEETLDKGIDVFLDIDWQGARQIREQMPLAKSVFILPPSNGELERRLNARGQDSDAVIAKRMSEAKSEISHYDEYDYVIINDDFDTAQMDFRSIIRAERLKQDKQTTKYKGMLEALLAD.

Residues 4–184 (GTLYIVSAPS…AQMDFRSIIR (181 aa)) form the Guanylate kinase-like domain. 11–18 (APSGAGKS) is a binding site for ATP.

Belongs to the guanylate kinase family.

It localises to the cytoplasm. The enzyme catalyses GMP + ATP = GDP + ADP. In terms of biological role, essential for recycling GMP and indirectly, cGMP. The polypeptide is Guanylate kinase (Aliivibrio fischeri (strain ATCC 700601 / ES114) (Vibrio fischeri)).